The sequence spans 382 residues: Dual-specificity RNA methyltransferase RlmN (382 aa).

E96 (proton acceptor) is an active-site residue. The region spanning 102 to 340 (QNGRGTLCVS…VTVRTTRGDD (239 aa)) is the Radical SAM core domain. A disulfide bond links C109 and C345. Residues C116, C120, and C123 each coordinate [4Fe-4S] cluster. Residues 170 to 171 (GE), S202, 224 to 226 (SLH), and N302 contribute to the S-adenosyl-L-methionine site. C345 functions as the S-methylcysteine intermediate in the catalytic mechanism.

This sequence belongs to the radical SAM superfamily. RlmN family. [4Fe-4S] cluster is required as a cofactor.

Its subcellular location is the cytoplasm. It catalyses the reaction adenosine(2503) in 23S rRNA + 2 reduced [2Fe-2S]-[ferredoxin] + 2 S-adenosyl-L-methionine = 2-methyladenosine(2503) in 23S rRNA + 5'-deoxyadenosine + L-methionine + 2 oxidized [2Fe-2S]-[ferredoxin] + S-adenosyl-L-homocysteine. The catalysed reaction is adenosine(37) in tRNA + 2 reduced [2Fe-2S]-[ferredoxin] + 2 S-adenosyl-L-methionine = 2-methyladenosine(37) in tRNA + 5'-deoxyadenosine + L-methionine + 2 oxidized [2Fe-2S]-[ferredoxin] + S-adenosyl-L-homocysteine. Functionally, specifically methylates position 2 of adenine 2503 in 23S rRNA and position 2 of adenine 37 in tRNAs. m2A2503 modification seems to play a crucial role in the proofreading step occurring at the peptidyl transferase center and thus would serve to optimize ribosomal fidelity. The polypeptide is Dual-specificity RNA methyltransferase RlmN (Ectopseudomonas mendocina (strain ymp) (Pseudomonas mendocina)).